The chain runs to 310 residues: Putative S-adenosyl-L-methionine-dependent methyltransferase MMAR_3534 (310 aa).

S-adenosyl-L-methionine-binding positions include D131 and 160 to 161 (DL).

This sequence belongs to the UPF0677 family.

In terms of biological role, exhibits S-adenosyl-L-methionine-dependent methyltransferase activity. This is Putative S-adenosyl-L-methionine-dependent methyltransferase MMAR_3534 from Mycobacterium marinum (strain ATCC BAA-535 / M).